The sequence spans 373 residues: G protein-coupled receptor 137Ba (373 aa).

The Lumenal segment spans residues M1–P15. The chain crosses the membrane as a helical span at residues Y16–V36. Residues Y37 to T55 lie on the Cytoplasmic side of the membrane. A helical transmembrane segment spans residues V56–F76. Residues K77–T84 are Lumenal-facing. Residues L85–L105 form a helical membrane-spanning segment. Over S106–Y135 the chain is Cytoplasmic. A helical membrane pass occupies residues L136 to V156. Residues K157–S176 are Lumenal-facing. Residues L177–L197 traverse the membrane as a helical segment. Topologically, residues A198–T213 are cytoplasmic. A helical membrane pass occupies residues L214 to L234. Topologically, residues A235–V268 are lumenal. A helical membrane pass occupies residues V269–F289. Residues R290 to Y373 lie on the Cytoplasmic side of the membrane.

This sequence belongs to the GPR137 family.

The protein localises to the lysosome membrane. Lysosomal integral membrane protein that regulates the localization and activity of mTORC1, a signaling complex promoting cell growth in response to growth factors, energy levels, and amino acids. Interacts with Rag GTPases and increases the lysosomial localization and activity of Rag GTPases and thereby regulates mTORC1 translocation and activity in lysosome. Also acts as a negative regulator of osteoclast activity. May be involved in interleukin-4-induced M2 macrophage polarization. Functionally, also acts as a negative regulator of osteoclast activity. May be involved in interleukin-4-induced M2 macrophage polarization. The protein is G protein-coupled receptor 137Ba of Danio rerio (Zebrafish).